The sequence spans 209 residues: PRA1 family protein A1 (209 aa).

A run of 4 helical transmembrane segments spans residues 51 to 73 (LYYY…VLTR), 77 to 99 (IFAA…GSFS), 144 to 164 (VFVL…SGLL), and 166 to 186 (VSVA…LRTP).

The protein belongs to the PRA1 family.

The protein resides in the endoplasmic reticulum membrane. In terms of biological role, may be involved in both secretory and endocytic intracellular trafficking in the endosomal/prevacuolar compartments. The chain is PRA1 family protein A1 (PRA1A1) from Arabidopsis thaliana (Mouse-ear cress).